The chain runs to 491 residues: Ketol-acid reductoisomerase (NADP(+)) (491 aa).

Residues 15 to 208 (AQLGKCRFMG…GGHRAGVLES (194 aa)) enclose the KARI N-terminal Rossmann domain. NADP(+) is bound by residues 45–48 (CGAQ), arginine 68, arginine 76, serine 78, and 108–110 (DKQ). Residue histidine 132 is part of the active site. Glycine 158 serves as a coordination point for NADP(+). KARI C-terminal knotted domains follow at residues 209–344 (SFVA…TAPQ) and 345–484 (YEGK…MTDM). Mg(2+) contacts are provided by aspartate 217, glutamate 221, glutamate 389, and glutamate 393. Residue serine 414 participates in substrate binding.

The protein belongs to the ketol-acid reductoisomerase family. Mg(2+) is required as a cofactor.

It carries out the reaction (2R)-2,3-dihydroxy-3-methylbutanoate + NADP(+) = (2S)-2-acetolactate + NADPH + H(+). The enzyme catalyses (2R,3R)-2,3-dihydroxy-3-methylpentanoate + NADP(+) = (S)-2-ethyl-2-hydroxy-3-oxobutanoate + NADPH + H(+). It functions in the pathway amino-acid biosynthesis; L-isoleucine biosynthesis; L-isoleucine from 2-oxobutanoate: step 2/4. Its pathway is amino-acid biosynthesis; L-valine biosynthesis; L-valine from pyruvate: step 2/4. Involved in the biosynthesis of branched-chain amino acids (BCAA). Catalyzes an alkyl-migration followed by a ketol-acid reduction of (S)-2-acetolactate (S2AL) to yield (R)-2,3-dihydroxy-isovalerate. In the isomerase reaction, S2AL is rearranged via a Mg-dependent methyl migration to produce 3-hydroxy-3-methyl-2-ketobutyrate (HMKB). In the reductase reaction, this 2-ketoacid undergoes a metal-dependent reduction by NADPH to yield (R)-2,3-dihydroxy-isovalerate. In Escherichia coli O7:K1 (strain IAI39 / ExPEC), this protein is Ketol-acid reductoisomerase (NADP(+)).